Here is a 472-residue protein sequence, read N- to C-terminus: MSDSGGFDSHPHVALIPSAGMGHLTPFLRLAASLVQHHCRVTLITTYPTVSLAETQHVSHFLSAYPQVTEKRFHLLPFDPNSANATDPFLLRWEAIRRSAHLLAPLLSPPLSALITDVTLISAVLPVTINLHLPNYVLFTASAKMFSLTASFPAIVASKSTSSGSVEFDDDFIEIPGLPPIPLSSVPPAVMDSKSLFATSFLENGNSFVKSNGVLINSFDALEADTLVALNGRRVVAGLPPVYAVGPLLPCEFEKRDDPSTSLILKWLDDQPEGSVVYVSFGSRLALSMEQTKELGDGLLSSGCRFLWVVKGKIVDKEDEESLKNVLGHELTEKIKDQGLVVKNWVDQDKVLSHRAVGGFVSHGGWNSLVEAARHGVPLLVWPHFGDQKINAEAVERAGLGMWVRSWGWGTELRAKGDEIGLKIKDLMANDFLREQAKRIEEEARKAIGVGGSSERTFKELIDKWKCNNNTH.

Histidine 23 (proton acceptor) is an active-site residue. An an anthocyanidin-binding site is contributed by histidine 23. Aspartate 117 functions as the Charge relay in the catalytic mechanism. Residue threonine 140 participates in UDP-alpha-D-glucose binding. A UDP region spans residues 283 to 284 (SR). Positions 346, 348, 363, 366, 367, 368, and 371 each coordinate UDP-alpha-D-glucose. Glycine 386 lines the an anthocyanidin pocket. The UDP-alpha-D-glucose site is built by aspartate 387 and glutamine 388.

This sequence belongs to the UDP-glycosyltransferase family. In terms of tissue distribution, expressed at low levels in leaves, flowers and immature leaves.

The enzyme catalyses a 3'-hydro-2'-hydroxy-beta-oxodihydrochalcone + UDP-alpha-D-glucose = a 3'-(beta-D-glucopyranosyl)-2'-hydroxy-beta-oxodihydrochalcone + UDP + H(+). Its function is as follows. UDP-glucose-dependent glucosyltransferase catalyzing the C-glucosylation of 2-hydroxyflavanones (2-hydroxylnaringenin and 2-hydroxypinocembrin) and phloretin. No activity with flavanones, flavones or flavonols. Exhibits C-glucosylation activity toward 2-phenyl-2',4',6'-trihydroxyacetophenone. Can use UDP-xylose as sugar donor, but catalytic efficiency is much lower toward UDP-xylose than toward UDP-glucose. The protein is UDP-glycosyltransferase 708G2 (UGT708G2) of Citrus unshiu (Satsuma mandarin).